Consider the following 413-residue polypeptide: Putative tRNA pseudouridine synthase C16C4.06c (413 aa).

D96 functions as the Nucleophile in the catalytic mechanism. Y154 serves as a coordination point for substrate.

It belongs to the tRNA pseudouridine synthase TruA family.

It localises to the cytoplasm. The protein localises to the nucleus. It catalyses the reaction a uridine in tRNA = a pseudouridine in tRNA. This chain is Putative tRNA pseudouridine synthase C16C4.06c, found in Schizosaccharomyces pombe (strain 972 / ATCC 24843) (Fission yeast).